Reading from the N-terminus, the 2904-residue chain is Protein eyes shut homolog (2904 aa).

An N-terminal signal peptide occupies residues 1–23; that stretch reads MRNPKLAIIVFLLSCVIYGPVYS. N-linked (GlcNAc...) asparagine glycosylation is found at Asn41 and Asn135. EGF-like domains follow at residues 174-216, 217-259, 263-298, and 300-336; these read KPQL…RYCE, NVDG…VNCS, GNQNCSKWCKEGACLKVSSTSYRCECFTGYTGTYCE, and KRLFCDSNPCRNDGRCEETANGYVCTCPGGFTGLNCE. Disulfide bonds link Cys178/Cys193, Cys187/Cys204, Cys206/Cys215, Cys221/Cys232, Cys226/Cys247, and Cys249/Cys258. N-linked (GlcNAc...) asparagine glycosylation is found at Asn257 and Asn266. 6 disulfide bridges follow: Cys267–Cys276, Cys271–Cys286, Cys288–Cys297, Cys304–Cys315, Cys309–Cys324, and Cys326–Cys335. Residue Asn362 is glycosylated (N-linked (GlcNAc...) asparagine). 3 consecutive EGF-like domains span residues 375–411, 413–451, and 453–496; these read QAEVCGTLPCLNGGICVVPNGQYHCRCRQGFSGKNCE, IIDFCKLLNINCLNEGLCLNRVGGYNCLCAPGWTGEFCQ, and LENA…PYCE. 12 disulfide bridges follow: Cys379–Cys390, Cys384–Cys399, Cys401–Cys410, Cys417–Cys430, Cys424–Cys439, Cys441–Cys450, Cys457–Cys470, Cys464–Cys484, Cys486–Cys495, Cys502–Cys513, Cys507–Cys522, and Cys524–Cys533. The region spanning 498–534 is the EGF-like 8; calcium-binding domain; sequence EVNECDSSPCQHQGTCTDFVGYYKCTCPSGYTGIDCE. The N-linked (GlcNAc...) asparagine glycan is linked to Asn544. Positions 565–603 constitute an EGF-like 9 domain; sequence HTPCPHYLQPCANGGHCVLHNITSYSCVCAPGWTGATCL. Disulfide bonds link Cys568–Cys581, Cys575–Cys591, Cys593–Cys602, Cys609–Cys620, Cys614–Cys629, Cys631–Cys640, Cys645–Cys656, Cys650–Cys665, Cys667–Cys676, Cys683–Cys694, Cys688–Cys703, Cys705–Cys714, Cys721–Cys732, Cys726–Cys741, Cys743–Cys752, Cys759–Cys772, Cys764–Cys781, Cys783–Cys792, Cys799–Cys810, Cys804–Cys819, Cys821–Cys830, Cys837–Cys848, Cys842–Cys857, Cys859–Cys868, Cys875–Cys886, Cys880–Cys895, Cys897–Cys906, Cys913–Cys924, Cys918–Cys933, Cys935–Cys944, Cys951–Cys962, Cys956–Cys971, Cys973–Cys982, Cys987–Cys999, Cys993–Cys1014, Cys1016–Cys1025, Cys1032–Cys1042, Cys1037–Cys1051, Cys1053–Cys1062, Cys1069–Cys1080, Cys1074–Cys1089, Cys1091–Cys1100, Cys1107–Cys1118, Cys1112–Cys1127, Cys1129–Cys1138, Cys1145–Cys1156, Cys1150–Cys1167, Cys1169–Cys1178, Cys1185–Cys1198, Cys1192–Cys1208, Cys1210–Cys1219, Cys1226–Cys1237, Cys1231–Cys1246, Cys1248–Cys1257, Cys1264–Cys1275, Cys1269–Cys1284, Cys1286–Cys1295, Cys1302–Cys1313, Cys1307–Cys1322, Cys1324–Cys1333, Cys1340–Cys1351, Cys1345–Cys1360, Cys1362–Cys1371, Cys1378–Cys1388, Cys1383–Cys1397, Cys1399–Cys1408, Cys1415–Cys1426, Cys1420–Cys1435, Cys1437–Cys1446, Cys1453–Cys1469, Cys1463–Cys1479, Cys1481–Cys1490, Cys1497–Cys1508, Cys1502–Cys1517, Cys1519–Cys1528, Cys1535–Cys1545, Cys1540–Cys1556, and Cys1558–Cys1567. A glycan (N-linked (GlcNAc...) asparagine) is linked at Asn585. Residues 605–641 form the EGF-like 10; calcium-binding domain; that stretch reads NINECVQHRCQNRATCVDEVGGYSCLCGHGYTGVHCE. In terms of domain architecture, EGF-like 11 spans 642-677; it reads LDFCSGHQCSEHAVCVDQQHNYTCRCMLGYEGTLCE. N-linked (GlcNAc...) asparagine glycosylation is present at Asn662. The EGF-like 12; calcium-binding domain occupies 679 to 715; it reads ETDECKSAPCTNNATCIDLVAGYQCLCAPGFKGRTCS. An N-linked (GlcNAc...) asparagine glycan is attached at Asn691. EGF-like domains lie at 717–753, 755–793, and 795–831; these read SMNECWSRPCNNGGSCIDLVNDYICNCPLGFTGHDCS, PATGCTSNPCNTKGTSMCEEQQDGFKCVCHHGYTGLFCE, and SINHCVEGLCHHGSECVDLTKGFMCECLPGLRGRLCE. The EGF-like 16; calcium-binding domain maps to 833–869; the sequence is NIDDCLDKPCGALSICKDGINAYDCFCAPGFVGNNCE. One can recognise an EGF-like 17; calcium-binding domain in the interval 871-907; sequence EVNECLSQPCQNGASCSDELNSFSCLCLAGTTGSLCE. Residues 909-945 enclose the EGF-like 18; calcium-binding domain; the sequence is NIDECQSSPCMNNGTCLDLSDGFKCICPSGFSGPECS. An N-linked (GlcNAc...) asparagine glycan is attached at Asn921. One can recognise an EGF-like 19; calcium-binding domain in the interval 947 to 983; sequence DINECVSYPCKNGGSCIDQPGNYYCRCLAPFKGLNCE. In terms of domain architecture, EGF-like 20 spans 984-1026; sequence LLPCEAVNPCDNGAECVEEADLVLFPLGFQCRCRKGFTGPRCE. Positions 1028–1063 constitute an EGF-like 21; calcium-binding domain; that stretch reads NIDECSSNPCLNGFCYDAVDGFYCLCNPGYAGVRCE. The 37-residue stretch at 1065-1101 folds into the EGF-like 22 domain; that stretch reads HINDCASNMCENNSTCVDLHLSYNCLCLPGWEGEYCQ. The N-linked (GlcNAc...) asparagine glycan is linked to Asn1077. An EGF-like 23; calcium-binding domain is found at 1103–1139; sequence ETNECLSNPCKNNATCTDLLNAYRCVCPQGWTGLDCD. A glycan (N-linked (GlcNAc...) asparagine) is linked at Asn1115. 2 EGF-like domains span residues 1141-1179 and 1181-1220; these read DVKECSSSPCLNGAHCVESDTPGEFSCTCPPFFTGPLCE and PYDPCELQRNPCLHNSTCRAQSDGTALCVCPVGFEGTRCE. Residue Asn1195 is glycosylated (N-linked (GlcNAc...) asparagine). The EGF-like 26; calcium-binding domain maps to 1222–1258; sequence DSDDCVSRPCQNRGICVDGVNSYSCFCEPGFSGLHCE. An EGF-like 27; calcium-binding domain is found at 1260 to 1296; the sequence is DINECASNPCQNQAVCQDLVNGFQCSCVPGYFGPHCN. The EGF-like 28; calcium-binding domain occupies 1298 to 1334; it reads DVNECDSSPCLHESVCINKPGGFACVCSAGFSGKWCE. One can recognise an EGF-like 29; calcium-binding domain in the interval 1336–1372; sequence NVDECKSNPCRNNGSCIDGLNGYQCVCSRGFMGDHCE. Asn1348 is a glycosylation site (N-linked (GlcNAc...) asparagine). Residues 1374–1409 form the EGF-like 30; calcium-binding domain; that stretch reads NTDECSSGPCVHGSCLDEIDAFSCQCEVGWTGHRCQ. One can recognise an EGF-like 31; calcium-binding domain in the interval 1411–1447; it reads NINECEAHPCLNGGSCVDLLDKYACICADGFTGKNCD. In terms of domain architecture, EGF-like 32 spans 1449–1491; it reads DQNVCLQTSLNFSLCFNGGTCVDGPGVNFTCSCRPGFMGDFCE. N-linked (GlcNAc...) asparagine glycosylation is found at Asn1459 and Asn1476. One can recognise an EGF-like 33; calcium-binding domain in the interval 1493 to 1529; it reads EMNECCSEPCFNGAICQDLINGYQCHCRPGWTGLHCE. Residues 1531-1568 form the EGF-like 34 domain; it reads DINECLLQPCNQGMCIQNEPGHGYTCFCRPGFVGENCE. Asn1591, Asn1755, and Asn1788 each carry an N-linked (GlcNAc...) asparagine glycan. The 179-residue stretch at 1640–1818 folds into the Laminin G-like 1 domain; that stretch reads ASFGGYSGNS…AIARNNVDNC (179 aa). 4 disulfides stabilise this stretch: Cys1792-Cys1818, Cys1860-Cys1871, Cys1865-Cys1885, and Cys1887-Cys1896. Residues 1856–1897 form the EGF-like 35 domain; that stretch reads PAPVCPQGICLNGGTCRPVSLPSGASSFFCDCPLHFTGRLCE. The 201-residue stretch at 1902-2102 folds into the Laminin G-like 2 domain; sequence VFSPRFDGNS…NIQNCDAAVC (201 aa). N-linked (GlcNAc...) asparagine glycosylation is found at Asn2025 and Asn2064. Cystine bridges form between Cys2071–Cys2102, Cys2102–Cys2113, Cys2107–Cys2122, Cys2124–Cys2133, Cys2138–Cys2149, Cys2143–Cys2159, and Cys2161–Cys2170. EGF-like domains lie at 2098–2134 and 2135–2171; these read DAAVCQHQPCRNGGTCISDAESWFCACPSLYSGKLCQ and FTACERNPCARGATCVPQTQLEAACLCPYGRQGLLCD. Residues Asn2175 and Asn2216 are each glycosylated (N-linked (GlcNAc...) asparagine). One can recognise a Laminin G-like 3 domain in the interval 2182-2372; that stretch reads SGLDEFGYSS…PLSGRNVGQC (191 aa). 7 cysteine pairs are disulfide-bonded: Cys2339–Cys2372, Cys2377–Cys2388, Cys2382–Cys2397, Cys2399–Cys2408, Cys2415–Cys2431, Cys2425–Cys2440, and Cys2442–Cys2451. 2 EGF-like domains span residues 2373–2409 and 2411–2452; these read GVNPCSLVFCHNGGTCVDSGSSVYCQCVFGWKGALCS and KVSF…LHCQ. Residues 2459-2642 form the Laminin G-like 4 domain; that stretch reads DPFFSGNQSS…NVGDWDGTAC (184 aa). Asn2465, Asn2528, and Asn2570 each carry an N-linked (GlcNAc...) asparagine glycan. EGF-like domains are found at residues 2638–2675 and 2676–2714; these read DGTACGYKVCKNGGHCHPSGDFSFTCICPSLWTGSRCQ and QSIQCLNNLCQHNSVCIHNSTSASYSCMCSLGWTGTHCD. 6 disulfides stabilise this stretch: Cys2642-Cys2653, Cys2647-Cys2663, Cys2665-Cys2674, Cys2680-Cys2691, Cys2685-Cys2702, and Cys2704-Cys2713. Asn2694 is a glycosylation site (N-linked (GlcNAc...) asparagine). The region spanning 2719–2894 is the Laminin G-like 5 domain; sequence LKTIRFIGNS…TKQLQFLQTC (176 aa). N-linked (GlcNAc...) asparagine glycosylation is found at Asn2750 and Asn2816.

The protein belongs to the EYS family. As to expression, expressed in retina where it localizes between the retinal pigment epithelium and the outer nuclear layer (at protein level).

It is found in the cell projection. Its subcellular location is the cilium. It localises to the cytoplasm. The protein localises to the cytoskeleton. The protein resides in the cilium axoneme. It is found in the secreted. Its subcellular location is the extracellular space. It localises to the extracellular matrix. The protein localises to the interphotoreceptor matrix. Its function is as follows. Required to maintain the integrity of photoreceptor cells. Specifically required for normal morphology of the photoreceptor ciliary pocket, and might thus facilitate protein trafficking between the photoreceptor inner and outer segments via the transition zone. This Danio rerio (Zebrafish) protein is Protein eyes shut homolog.